A 216-amino-acid polypeptide reads, in one-letter code: Probable csgAB operon transcriptional regulatory protein (216 aa).

Residues 149-214 (NSTESALLTH…QAVSWANDNL (66 aa)) enclose the HTH luxR-type domain. Residues 173 to 192 (NNEIARSLFISENTVKTHLY) constitute a DNA-binding region (H-T-H motif).

Functionally, the master regulator for adhesive curli fimbriae expression; necessary for transcription of the csgAB operon. Plays a positive role in biofilm formation. The sequence is that of Probable csgAB operon transcriptional regulatory protein from Salmonella typhimurium (strain LT2 / SGSC1412 / ATCC 700720).